The following is a 344-amino-acid chain: 3-isopropylmalate dehydrogenase (344 aa).

Positions 93, 103, 131, and 215 each coordinate substrate. 3 residues coordinate Mg(2+): Asp-215, Asp-239, and Asp-243. 273 to 285 (GSAPDIAGKGIAN) lines the NAD(+) pocket.

The protein belongs to the isocitrate and isopropylmalate dehydrogenases family. LeuB type 1 subfamily. As to quaternary structure, homodimer. Requires Mg(2+) as cofactor. It depends on Mn(2+) as a cofactor.

Its subcellular location is the cytoplasm. It catalyses the reaction (2R,3S)-3-isopropylmalate + NAD(+) = 4-methyl-2-oxopentanoate + CO2 + NADH. It participates in amino-acid biosynthesis; L-leucine biosynthesis; L-leucine from 3-methyl-2-oxobutanoate: step 3/4. Its function is as follows. Catalyzes the oxidation of 3-carboxy-2-hydroxy-4-methylpentanoate (3-isopropylmalate) to 3-carboxy-4-methyl-2-oxopentanoate. The product decarboxylates to 4-methyl-2 oxopentanoate. The chain is 3-isopropylmalate dehydrogenase from Streptococcus mutans serotype c (strain ATCC 700610 / UA159).